Here is a 316-residue protein sequence, read N- to C-terminus: Apolipoprotein E (316 aa).

Positions 1-18 are cleaved as a signal peptide; sequence MKALWAVLVVTLLAGCLA. Tandem repeats lie at residues 76-97, 98-119, 120-141, 142-163, 164-185, 186-207, 208-229, and 230-251. Residues 76–251 are 8 X 22 AA approximate tandem repeats; the sequence is VLMEDTMTEL…RLEEVREQME (176 aa). A Methionine sulfoxide modification is found at methionine 139. Position 143 is a phosphoserine (serine 143). The tract at residues 154–164 is LDL and other lipoprotein receptors binding; the sequence is HLRKLRKRLMR. Heparin is bound at residue 158 to 161; sequence LRKR. The lipid-binding and lipoprotein association stretch occupies residues 206–286; it reads TANLGAGAAQ…GWFEPLVEDM (81 aa). 225–232 contributes to the heparin binding site; the sequence is GARIRGRL. The tract at residues 262–316 is homooligomerization; it reads QQMRLQAEIFQTRLKGWFEPLVEDMQRQWANLMEKIQASVATNPIPPSSVPQESQ. Residues 274-286 are specificity for association with VLDL; sequence RLKGWFEPLVEDM.

Belongs to the apolipoprotein A1/A4/E family. Homotetramer. May interact with ABCA1; functionally associated with ABCA1 in the biogenesis of HDLs. May interact with APP/A4 amyloid-beta peptide; the interaction is extremely stable in vitro but its physiological significance is unclear. May interact with MAPT. May interact with MAP2. In the cerebrospinal fluid, interacts with secreted SORL1. Interacts with PMEL; this allows the loading of PMEL luminal fragment on ILVs to induce fibril nucleation. In terms of processing, APOE exists as multiple glycosylated and sialylated glycoforms within cells and in plasma. The extent of glycosylation and sialylation are tissue and context specific. Post-translationally, glycated in plasma VLDL. Phosphorylated by FAM20C in the extracellular medium.

It is found in the secreted. The protein resides in the extracellular space. It localises to the extracellular matrix. The protein localises to the extracellular vesicle. Its subcellular location is the endosome. It is found in the multivesicular body. Functionally, APOE is an apolipoprotein, a protein associating with lipid particles, that mainly functions in lipoprotein-mediated lipid transport between organs via the plasma and interstitial fluids. APOE is a core component of plasma lipoproteins and is involved in their production, conversion and clearance. Apolipoproteins are amphipathic molecules that interact both with lipids of the lipoprotein particle core and the aqueous environment of the plasma. As such, APOE associates with chylomicrons, chylomicron remnants, very low density lipoproteins (VLDL) and intermediate density lipoproteins (IDL) but shows a preferential binding to high-density lipoproteins (HDL). It also binds a wide range of cellular receptors including the LDL receptor/LDLR, the LDL receptor-related proteins LRP1, LRP2 and LRP8 and the very low-density lipoprotein receptor/VLDLR that mediate the cellular uptake of the APOE-containing lipoprotein particles. Finally, APOE also has a heparin-binding activity and binds heparan-sulfate proteoglycans on the surface of cells, a property that supports the capture and the receptor-mediated uptake of APOE-containing lipoproteins by cells. A main function of APOE is to mediate lipoprotein clearance through the uptake of chylomicrons, VLDLs, and HDLs by hepatocytes. APOE is also involved in the biosynthesis by the liver of VLDLs as well as their uptake by peripheral tissues ensuring the delivery of triglycerides and energy storage in muscle, heart and adipose tissues. By participating in the lipoprotein-mediated distribution of lipids among tissues, APOE plays a critical role in plasma and tissues lipid homeostasis. APOE is also involved in two steps of reverse cholesterol transport, the HDLs-mediated transport of cholesterol from peripheral tissues to the liver, and thereby plays an important role in cholesterol homeostasis. First, it is functionally associated with ABCA1 in the biogenesis of HDLs in tissues. Second, it is enriched in circulating HDLs and mediates their uptake by hepatocytes. APOE also plays an important role in lipid transport in the central nervous system, regulating neuron survival and sprouting. This is Apolipoprotein E (APOE) from Microtus ochrogaster (Prairie vole).